We begin with the raw amino-acid sequence, 648 residues long: RAF proto-oncogene serine/threonine-protein kinase (648 aa).

Ser29 bears the Phosphoserine; by MAPK1 mark. Ser43 bears the Phosphoserine mark. The 76-residue stretch at 56 to 131 (NTIRVFLPNK…IGEELQVDFL (76 aa)) folds into the RBD domain. The Phorbol-ester/DAG-type zinc-finger motif lies at 138 to 184 (THNFARKTFLKLAFCDICQKFLLNGFRCQTCGYKFHEHCSTKVPTMC). The Zn(2+) site is built by His139, Cys152, Cys155, Cys165, Cys168, His173, Cys176, and Cys184. The segment at 217–335 (MRESVSRMPA…EKNKIRPRGQ (119 aa)) is disordered. Ser233 bears the Phosphoserine; by PKA mark. Polar residues predominate over residues 239 to 271 (TFNTSSPSSEGSLSQRQRSTSTPNVHMVSTTLP). Phosphoserine is present on residues Ser252 and Ser259. The residue at position 268 (Thr268) is a Phosphothreonine; by autocatalysis. Thr269 carries the phosphothreonine; by PKA modification. A compositionally biased stretch (basic and acidic residues) spans 275–285 (RMIEDAIRSHS). Residues 286–301 (ESASPSALSSSPNNLS) are compositionally biased toward low complexity. Phosphoserine; by MAPK1 occurs at positions 289, 296, and 301. The interval 331-349 (RPRGQRDSSYYWEIEASEV) is interaction with PEBP1/RKIP. Ser338 carries the post-translational modification Phosphoserine; by PAK1, PAK2, PAK3 and PAK5. Residue Ser339 is modified to Phosphoserine; by PAK1, PAK2 and PAK3. Phosphotyrosine; by SRC occurs at positions 340 and 341. The 261-residue stretch at 349–609 (VMLSTRIGSG…PQILSSIELL (261 aa)) folds into the Protein kinase domain. ATP is bound by residues 355–363 (IGSGSFGTV) and Lys375. The active-site Proton acceptor is the Asp468. Phosphoserine is present on Ser471. Thr491 carries the post-translational modification Phosphothreonine. Ser494 bears the Phosphoserine mark. A phosphoserine; by PKC mark is found at Ser497 and Ser499. Arg563 is subject to Symmetric dimethylarginine; by PRMT5. The residue at position 621 (Ser621) is a Phosphoserine. Position 642 is a phosphoserine; by MAPK1 (Ser642).

It belongs to the protein kinase superfamily. TKL Ser/Thr protein kinase family. RAF subfamily. As to quaternary structure, monomer. Homodimer. Heterodimerizes with BRAF and this heterodimer possesses a highly increased kinase activity compared to the respective homodimers or monomers. Heterodimerization is mitogen-regulated and enhanced by 14-3-3 proteins. MAPK1/ERK2 activation can induce a negative feedback that promotes the dissociation of the heterodimer. Forms a multiprotein complex with Ras (M-Ras/MRAS), SHOC2 and protein phosphatase 1 (PPP1CA, PPP1CB and PPP1CC). Interacts with LZTR1. Interacts with Ras proteins; the interaction is antagonized by RIN1. Weakly interacts with RIT1. Interacts with STK3/MST2; the interaction inhibits its pro-apoptotic activity. Interacts (when phosphorylated at Ser-259) with YWHAZ (unphosphorylated at 'Thr-232'). Interacts with MAP3K5/ASF1 (via N-terminus) and this interaction inhibits the proapoptotic function of MAP3K5/ASK1. Interacts with PAK1 (via kinase domain). The phosphorylated form interacts with PIN1. The Ser-338 and Ser-339 phosphorylated form (by PAK1) interacts with BCL2. Interacts with PEBP1/RKIP and this interaction is enhanced if RAF1 is phosphorylated on residues Ser-338, Ser-339, Tyr-340 and Tyr-341. Interacts with ADCY2, ADCY5, ADCY6, DGKH, RCAN1/DSCR1, PPP1R12A, PKB/AKT1, PPP2CA, PPP2R1B, SPRY2, SPRY4, CNKSR1/CNK1, KSR2 and PHB/prohibitin. Interacts with ROCK2. Interacts (via N-terminus) with RGS14 (via RBD domains); the interaction mediates the formation of a ternary complex with BRAF, a ternary complex inhibited by GNAI1. Probably forms a complex composed of chaperones HSP90 and HSP70, co-chaperones CDC37, PPP5C, TSC1 and client protein TSC2, CDK4, AKT, RAF1 and NR3C1; this complex does not contain co-chaperones STIP1/HOP and PTGES3/p23. Interacts with MAP2K1/MEK1 and MAP2K2/MEK2. In its active form, interacts with PRMT5. Interacts with FAM83B; displaces 14-3-3 proteins from RAF1 and activates RAF1. Interacts with PDE8A; the interaction promotes RAF1 activity. Interacts with MFHAS1. Interacts with GLS. Interacts with YWHAZ. Interacts with NEK10 and MAP2K1; the interaction is direct with NEK10 and required for ERK1/2-signaling pathway activation in response to UV irradiation. Zn(2+) is required as a cofactor. Phosphorylation at Thr-269, Ser-338, Tyr-341, Thr-491 and Ser-494 results in its activation. Phosphorylation at Ser-29, Ser-43, Ser-289, Ser-296, Ser-301 and Ser-642 by MAPK1/ERK2 results in its inactivation. Phosphorylation at Ser-259 induces the interaction with YWHAZ and inactivates kinase activity. Dephosphorylation of Ser-259 by the SHOC2-MRAS-PP1c (SMP) complex consisting of SHOC2, GTP-bound M-Ras/MRAS and the catalytic subunit of protein phosphatase 1 (PPP1CA, PPP1CB or PPP1CC); this relieves inactivation and stimulates kinase activity. Phosphorylation at Ser-338 by PAK1 and PAK5 and Ser-339 by PAK1 is required for its mitochondrial localization. Phosphorylation at Ser-621 in response to growth factor treatment stabilizes the protein, possibly by preventing proteasomal degradation. Phosphorylation at Ser-289, Ser-296, Ser-301, Ser-338 and Ser-621 are somehow linked to the methylation potential of cells. Treatment of cells with HGF in the presence of the methylation inhibitor 5'-methylthioadenosine (MTA) results in increased phosphorylation at Ser-338 and Ser-621 and decreased phosphorylation at Ser-296, Ser-301 and Ser-338. Dephosphorylation at Ser-338 by PPP5C results in a decreased of activity. In terms of processing, methylated in response to EGF treatment. This modification leads to destabilization of the protein, possibly through proteasomal degradation.

It is found in the cytoplasm. It localises to the cell membrane. The protein localises to the mitochondrion. Its subcellular location is the nucleus. The catalysed reaction is L-seryl-[protein] + ATP = O-phospho-L-seryl-[protein] + ADP + H(+). It catalyses the reaction L-threonyl-[protein] + ATP = O-phospho-L-threonyl-[protein] + ADP + H(+). Its activity is regulated as follows. Regulation is a highly complex process involving membrane recruitment, protein-protein interactions, dimerization, and phosphorylation/dephosphorylation events. Ras-GTP recruits RAF1 to the membrane, thereby promoting its activation. The inactive conformation of RAF1 is maintained by autoinhibitory interactions occurring between the N-terminal regulatory and the C-terminal catalytic domains and by the binding of a 14-3-3 protein that contacts two phosphorylation sites, Ser-259 and Ser-621. Upon mitogenic stimulation, Ras and PPP2R1A cooperate to release autoinhibition and the subsequent phosphorylation of activating sites: Ser-338, Tyr-341, Thr-491, and Ser-494, yields a fully active kinase. Through a negative feedback mechanism involving MAPK1/ERK2, RAF1 is phosphorylated on Ser-29, Ser-43, Ser-289, Ser-296, Ser-301 and Ser-642 by MAPK1/ERK2, which yields an inactive, desensitized kinase. The signaling-competent conformation of RAF1 is finally re-established by the coordinated action of PIN1, a prolyl isomerase that converts pSer and pThr residues from the cis to the trans conformation, which is preferentially recognized and dephosphorylated by PPP2R1A. Activated by homodimerization and heterodimerization (with BRAF). Also regulated through association with other proteins such as KSR2, CNKSR1/CNK1, PEBP1/RKIP, PHB/prohibitin and SPRY4. PEBP1/RKIP acts by dissociating RAF1 from its substrates MAP2K1/MEK1 and MAP2K2/MEK2. PHB/prohibitin facilitates the displacement of 14-3-3 from RAF1 by activated Ras, thereby promoting cell membrane localization and phosphorylation of RAF1 at the activating Ser-338. SPRY4 inhibits Ras-independent, but not Ras-dependent, activation of RAF1. CNKSR1/CNK1 regulates Src-mediated RAF1 activation. In terms of biological role, serine/threonine-protein kinase that acts as a regulatory link between the membrane-associated Ras GTPases and the MAPK/ERK cascade, and this critical regulatory link functions as a switch determining cell fate decisions including proliferation, differentiation, apoptosis, survival and oncogenic transformation. RAF1 activation initiates a mitogen-activated protein kinase (MAPK) cascade that comprises a sequential phosphorylation of the dual-specific MAPK kinases (MAP2K1/MEK1 and MAP2K2/MEK2) and the extracellular signal-regulated kinases (MAPK3/ERK1 and MAPK1/ERK2). The phosphorylated form of RAF1 (on residues Ser-338 and Ser-339, by PAK1) phosphorylates BAD/Bcl2-antagonist of cell death at 'Ser-75'. Phosphorylates adenylyl cyclases: ADCY2, ADCY5 and ADCY6, resulting in their activation. Phosphorylates PPP1R12A resulting in inhibition of the phosphatase activity. Can promote NF-kB activation and inhibit signal transducers involved in motility (ROCK2), apoptosis (MAP3K5/ASK1 and STK3/MST2), proliferation and angiogenesis (RB1). Can protect cells from apoptosis also by translocating to the mitochondria where it binds BCL2 and displaces BAD/Bcl2-antagonist of cell death. Regulates Rho signaling and migration, and is required for normal wound healing. Plays a role in the oncogenic transformation of epithelial cells via repression of the TJ protein, occludin (OCLN) by inducing the up-regulation of a transcriptional repressor SNAI2/SLUG, which induces down-regulation of OCLN. Restricts caspase activation in response to selected stimuli, notably Fas stimulation, pathogen-mediated macrophage apoptosis, and erythroid differentiation. Phosphorylates TNNT2/cardiac muscle troponin T. The polypeptide is RAF proto-oncogene serine/threonine-protein kinase (Raf1) (Rattus norvegicus (Rat)).